The primary structure comprises 335 residues: MTLPLLGPMTLSGFAHSWFFLFLFVVAGLVALYILMQLARQRRMLRFANMELLESVAPKRPSRWRHVPAILLVLSLLLFTIAMAGPTHDVRIPRNRAVVMLVIDVSQSMRATDVEPSRMVAAQEAAKQFADELTPGINLGLIAYAGTATVLVSPTTNREATKNALDKLQFADRTATGEAIFTALQAIATVGAVIGGGDTPPPARIVLFSDGKETMPTNPDNPKGAYTAARTAKDQGVPISTISFGTPYGFVEIDDQRQPVPVDDETMKKVAQLSGGNSYNAATLAELRAVYSSLQQQIGYETIKGDASVGWLRLGALALALAALAALLINRRLPT.

The next 2 membrane-spanning stretches (helical) occupy residues 18–38 (WFFLFLFVVAGLVALYILMQL) and 67–87 (VPAILLVLSLLLFTIAMAGPT). Residues 98–294 (VVMLVIDVSQ…AELRAVYSSL (197 aa)) form the VWFA domain. The helical transmembrane segment at 309–329 (VGWLRLGALALALAALAALLI) threads the bilayer.

Belongs to the UPF0353 family.

It localises to the cell membrane. The sequence is that of UPF0353 protein BCG_1543 from Mycobacterium bovis (strain BCG / Pasteur 1173P2).